The primary structure comprises 576 residues: Adenine deaminase (576 aa).

The protein belongs to the metallo-dependent hydrolases superfamily. Adenine deaminase family. Mn(2+) serves as cofactor.

The catalysed reaction is adenine + H2O + H(+) = hypoxanthine + NH4(+). The protein is Adenine deaminase of Bacillus pumilus (strain SAFR-032).